The chain runs to 227 residues: MATWSNFNLQNSASPLMEQIIFFHDHTLVILIMITILVGYLMISLFFNSYINRFLLEGQMIELIWTILPAITLIFIALPSLRLLYLLDELNNPLITLKSIGHQWYWSYEYSDFQNIQFDSYMIPINEMKNNNFRLLDVDNRIVLPMNNQIRILVTATDVIHSWTIPSLGVKVDANPGRLNQTNFFINRPGIFYGQCSEICGANHSFMPIVIESISIKNFINWINNYS.

Topologically, residues 1–26 (MATWSNFNLQNSASPLMEQIIFFHDH) are mitochondrial intermembrane. A helical membrane pass occupies residues 27–51 (TLVILIMITILVGYLMISLFFNSYI). Over 52-62 (NRFLLEGQMIE) the chain is Mitochondrial matrix. A helical membrane pass occupies residues 63-81 (LIWTILPAITLIFIALPSL). At 82–227 (RLLYLLDELN…NFINWINNYS (146 aa)) the chain is on the mitochondrial intermembrane side. Residues histidine 161, cysteine 196, glutamate 198, cysteine 200, histidine 204, and methionine 207 each contribute to the Cu cation site. Residue glutamate 198 coordinates Mg(2+).

It belongs to the cytochrome c oxidase subunit 2 family. In terms of assembly, component of the cytochrome c oxidase (complex IV, CIV), a multisubunit enzyme composed of a catalytic core of 3 subunits and several supernumerary subunits. The complex exists as a monomer or a dimer and forms supercomplexes (SCs) in the inner mitochondrial membrane with ubiquinol-cytochrome c oxidoreductase (cytochrome b-c1 complex, complex III, CIII). Cu cation is required as a cofactor.

It is found in the mitochondrion inner membrane. The catalysed reaction is 4 Fe(II)-[cytochrome c] + O2 + 8 H(+)(in) = 4 Fe(III)-[cytochrome c] + 2 H2O + 4 H(+)(out). In terms of biological role, component of the cytochrome c oxidase, the last enzyme in the mitochondrial electron transport chain which drives oxidative phosphorylation. The respiratory chain contains 3 multisubunit complexes succinate dehydrogenase (complex II, CII), ubiquinol-cytochrome c oxidoreductase (cytochrome b-c1 complex, complex III, CIII) and cytochrome c oxidase (complex IV, CIV), that cooperate to transfer electrons derived from NADH and succinate to molecular oxygen, creating an electrochemical gradient over the inner membrane that drives transmembrane transport and the ATP synthase. Cytochrome c oxidase is the component of the respiratory chain that catalyzes the reduction of oxygen to water. Electrons originating from reduced cytochrome c in the intermembrane space (IMS) are transferred via the dinuclear copper A center (CU(A)) of subunit 2 and heme A of subunit 1 to the active site in subunit 1, a binuclear center (BNC) formed by heme A3 and copper B (CU(B)). The BNC reduces molecular oxygen to 2 water molecules using 4 electrons from cytochrome c in the IMS and 4 protons from the mitochondrial matrix. In Choristoneura fumiferana (Spruce budworm moth), this protein is Cytochrome c oxidase subunit 2 (COII).